The chain runs to 316 residues: tRNA pseudouridine synthase B (316 aa).

The active-site Nucleophile is the Asp-47.

The protein belongs to the pseudouridine synthase TruB family. Type 1 subfamily.

The enzyme catalyses uridine(55) in tRNA = pseudouridine(55) in tRNA. In terms of biological role, responsible for synthesis of pseudouridine from uracil-55 in the psi GC loop of transfer RNAs. The protein is tRNA pseudouridine synthase B of Aliivibrio fischeri (strain MJ11) (Vibrio fischeri).